A 336-amino-acid chain; its full sequence is D-alanine--D-alanine ligase (336 aa).

Positions 124-330 (KMWFSALGIP…FTEYLSLVIK (207 aa)) constitute an ATP-grasp domain. Residue 154 to 209 (ALENWGSIFVKAASQGSSVGCYKVDDSSKVAGVLKDAFGYAPYVIVEKTIKARELE) participates in ATP binding. Mg(2+) is bound by residues Asp284, Glu297, and Asn299.

This sequence belongs to the D-alanine--D-alanine ligase family. The cofactor is Mg(2+). Requires Mn(2+) as cofactor.

Its subcellular location is the cytoplasm. The enzyme catalyses 2 D-alanine + ATP = D-alanyl-D-alanine + ADP + phosphate + H(+). It participates in cell wall biogenesis; peptidoglycan biosynthesis. Functionally, cell wall formation. The protein is D-alanine--D-alanine ligase of Shewanella sp. (strain MR-7).